The chain runs to 214 residues: Adenylate kinase (214 aa).

Position 12-17 (12-17) interacts with ATP; sequence GVGKGT. Positions 32 to 61 are NMP; it reads STGNIFRSQIASNSELGIKLKEIVESGGYV. AMP-binding positions include Thr33, Arg38, 59-61, 88-91, and Gln95; these read GYV and GYPR. Residues 126–163 form an LID region; the sequence is GRRICPSCNAQYHIYFKKSKLDTKCEIDQSELIQRKDD. Arg127 serves as a coordination point for ATP. The Zn(2+) site is built by Cys130, Cys133, Cys150, and Asp153. AMP-binding residues include Arg160 and Arg171. Residue Lys199 participates in ATP binding.

The protein belongs to the adenylate kinase family. Monomer.

The protein resides in the cytoplasm. The enzyme catalyses AMP + ATP = 2 ADP. The protein operates within purine metabolism; AMP biosynthesis via salvage pathway; AMP from ADP: step 1/1. Functionally, catalyzes the reversible transfer of the terminal phosphate group between ATP and AMP. Plays an important role in cellular energy homeostasis and in adenine nucleotide metabolism. The chain is Adenylate kinase from Mycoplasmopsis pulmonis (strain UAB CTIP) (Mycoplasma pulmonis).